We begin with the raw amino-acid sequence, 86 residues long: Small ribosomal subunit protein bS16 (86 aa).

This sequence belongs to the bacterial ribosomal protein bS16 family.

This is Small ribosomal subunit protein bS16 from Mycoplasmoides gallisepticum (strain R(low / passage 15 / clone 2)) (Mycoplasma gallisepticum).